The sequence spans 479 residues: MGAFLDKPKTEKHNAHGAGNGLRYGLSSMQGWRVEMEDAHTAVVGIPHGLEDWSFFAVYDGHAGSRVANYCSTHLLEHITTNEDFRAAGKSGSALELSVENVKNGIRTGFLKIDEYMRNFSDLRNGMDRSGSTAVGVMISPKHIYFINCGDSRAVLYRNGQVCFSTQDHKPCNPREKERIQNAGGSVMIQRVNGSLAVSRALGDYDYKCVDGKGPTEQLVSPEPEVYEILRAEEDEFIILACDGIWDVMSNEELCEYVKSRLEVSDDLENVCNWVVDTCLHKGSRDNMSIVLVCFSNAPKVSDEAVKKDSELDKHLESRVEEIMEKSGEEGMPDLAHVMRILSAENIPNLPPGGGLAGKRNVIEAVYSRLNPHRESDGASDEAEESGSQGKLVEALRQMRINHRGNYRQLLEEMLTSYRLAKVEGEESPAEPAATATSSNSDAGNPVTMQESHTESESGLAELDSSNEDAGTKMSGEKI.

The segment covering 1–14 (MGAFLDKPKTEKHN) has biased composition (basic and acidic residues). The interval 1 to 20 (MGAFLDKPKTEKHNAHGAGN) is disordered. G2 is lipidated: N-myristoyl glycine. K12 participates in a covalent cross-link: Glycyl lysine isopeptide (Lys-Gly) (interchain with G-Cter in ISG15). One can recognise a PPM-type phosphatase domain in the interval 23–295 (RYGLSSMQGW…DNMSIVLVCF (273 aa)). The Mn(2+) site is built by D60 and G61. Residue K142 forms a Glycyl lysine isopeptide (Lys-Gly) (interchain with G-Cter in ISG15) linkage. Mn(2+) is bound by residues D243 and D286. Residue S386 is modified to Phosphoserine. The tract at residues 423-479 (VEGEESPAEPAATATSSNSDAGNPVTMQESHTESESGLAELDSSNEDAGTKMSGEKI) is disordered. A compositionally biased stretch (low complexity) spans 430–439 (AEPAATATSS). Residues 440-451 (NSDAGNPVTMQE) are compositionally biased toward polar residues.

This sequence belongs to the PP2C family. Monomer. Interacts with PAK6. Interacts with the phosphorylated form of IKBKB/IKKB. The cofactor is Mg(2+). It depends on Mn(2+) as a cofactor. In terms of processing, isgylation negatively regulates its activity. Post-translationally, N-myristoylation is essential for the recognition of its substrates for dephosphorylation. As to expression, highly expressed in heart and skeletal muscle.

The protein resides in the cytoplasm. It localises to the cytosol. The protein localises to the membrane. It catalyses the reaction O-phospho-L-seryl-[protein] + H2O = L-seryl-[protein] + phosphate. It carries out the reaction O-phospho-L-threonyl-[protein] + H2O = L-threonyl-[protein] + phosphate. Enzyme with a broad specificity. Dephosphorylates CDK2 and CDK6 in vitro. Dephosphorylates PRKAA1 and PRKAA2. Inhibits TBK1-mediated antiviral signaling by dephosphorylating it at 'Ser-172'. Plays an important role in the termination of TNF-alpha-mediated NF-kappa-B activation through dephosphorylating and inactivating IKBKB/IKKB. The polypeptide is Protein phosphatase 1B (PPM1B) (Homo sapiens (Human)).